Here is a 391-residue protein sequence, read N- to C-terminus: Probable chaperonin-like protein PrmG (391 aa).

The segment at 153–191 (TTRWSVRSSPPPSNTSARTASSPPRRATHSGCRSRSSTA) is disordered. Over residues 154–174 (TRWSVRSSPPPSNTSARTASS) the composition is skewed to polar residues.

It belongs to the chaperonin (HSP60) family.

Probably plays an essential role in the productive folding of PrmA and PrmC, and thus in the formation of the active PrmABCD complex. This chain is Probable chaperonin-like protein PrmG, found in Gordonia sp. (strain TY-5).